Consider the following 513-residue polypeptide: ATP synthase subunit alpha (513 aa).

169–176 (GDRKTGKS) is an ATP binding site.

This sequence belongs to the ATPase alpha/beta chains family. F-type ATPases have 2 components, CF(1) - the catalytic core - and CF(0) - the membrane proton channel. CF(1) has five subunits: alpha(3), beta(3), gamma(1), delta(1), epsilon(1). CF(0) has three main subunits: a(1), b(2) and c(9-12). The alpha and beta chains form an alternating ring which encloses part of the gamma chain. CF(1) is attached to CF(0) by a central stalk formed by the gamma and epsilon chains, while a peripheral stalk is formed by the delta and b chains.

The protein resides in the cell membrane. It catalyses the reaction ATP + H2O + 4 H(+)(in) = ADP + phosphate + 5 H(+)(out). In terms of biological role, produces ATP from ADP in the presence of a proton gradient across the membrane. The alpha chain is a regulatory subunit. This is ATP synthase subunit alpha from Levilactobacillus brevis (strain ATCC 367 / BCRC 12310 / CIP 105137 / JCM 1170 / LMG 11437 / NCIMB 947 / NCTC 947) (Lactobacillus brevis).